An 84-amino-acid chain; its full sequence is Large ribosomal subunit protein bL27 (84 aa).

The interval 1 to 21 is disordered; that stretch reads MAHKKAGGSTRNGRDSNPKYL.

Belongs to the bacterial ribosomal protein bL27 family.

The polypeptide is Large ribosomal subunit protein bL27 (Francisella tularensis subsp. holarctica (strain FTNF002-00 / FTA)).